The chain runs to 429 residues: Saccharopine dehydrogenase-like oxidoreductase (429 aa).

The residue at position 2 (alanine 2) is an N-acetylalanine. A phosphoserine mark is found at serine 209, serine 215, and serine 217.

Belongs to the saccharopine dehydrogenase family.

This is Saccharopine dehydrogenase-like oxidoreductase (Sccpdh) from Rattus norvegicus (Rat).